The sequence spans 442 residues: Septin-8 (442 aa).

Positions Met1–Pro16 are enriched in basic and acidic residues. Positions Met1–Leu21 are disordered. At Ala2 the chain carries N-acetylalanine. At Ser10 the chain carries Phosphoserine. The Septin-type G domain maps to Gln41–Glu307. Residues Gly51–Ser58 are G1 motif. Residues Gly51–Ser58, Gly106, Lys187–Glu195, Gly241, and Arg256 each bind GTP. The tract at residues Asp103–Gly106 is G3 motif. Residues Ala186–Asp189 form a G4 motif region. Residues Leu322–Ala407 are a coiled coil. Over residues Gln411 to Pro420 the composition is skewed to polar residues. Residues Gln411–Pro442 form a disordered region.

This sequence belongs to the TRAFAC class TrmE-Era-EngA-EngB-Septin-like GTPase superfamily. Septin GTPase family. Septins polymerize into heterooligomeric protein complexes that form filaments, and can associate with cellular membranes, actin filaments and microtubules. GTPase activity is required for filament formation. Interacts with SEPTIN7. Interacts with CDK14, SEPTIN4 and SEPTIN5. Interacts with VAMP2; the interaction inhibits interaction of VAMP2 with SYP. Interacts with STX1A. Expressed in cerebrum, hippocampus and cerebellum (at protein level). Expressed in heart (at protein level).

The protein resides in the cytoplasm. It localises to the cytoskeleton. The protein localises to the synapse. It is found in the cell projection. Its subcellular location is the axon. The protein resides in the cytoplasmic vesicle. It localises to the secretory vesicle. The protein localises to the synaptic vesicle membrane. It is found in the presynapse. In terms of biological role, filament-forming cytoskeletal GTPase. May play a role in platelet secretion. Seems to participate in the process of SNARE complex formation in synaptic vesicles. The protein is Septin-8 of Rattus norvegicus (Rat).